The sequence spans 180 residues: NADH-quinone oxidoreductase subunit I (180 aa).

2 4Fe-4S ferredoxin-type domains span residues 50–80 and 90–119; these read LTRD…LQKA and EFFR…LTPD. [4Fe-4S] cluster contacts are provided by Cys-60, Cys-63, Cys-66, Cys-70, Cys-99, Cys-102, Cys-105, and Cys-109.

The protein belongs to the complex I 23 kDa subunit family. NDH-1 is composed of 13 different subunits. Subunits NuoA, H, J, K, L, M, N constitute the membrane sector of the complex. [4Fe-4S] cluster is required as a cofactor.

The protein localises to the cell inner membrane. The catalysed reaction is a quinone + NADH + 5 H(+)(in) = a quinol + NAD(+) + 4 H(+)(out). Functionally, NDH-1 shuttles electrons from NADH, via FMN and iron-sulfur (Fe-S) centers, to quinones in the respiratory chain. The immediate electron acceptor for the enzyme in this species is believed to be ubiquinone. Couples the redox reaction to proton translocation (for every two electrons transferred, four hydrogen ions are translocated across the cytoplasmic membrane), and thus conserves the redox energy in a proton gradient. In Shigella sonnei (strain Ss046), this protein is NADH-quinone oxidoreductase subunit I.